The sequence spans 239 residues: Small ribosomal subunit protein uS3 (239 aa).

In terms of domain architecture, KH type-2 spans 38–106 (IRELIEERFK…KTFVNVVEIK (69 aa)).

It belongs to the universal ribosomal protein uS3 family. In terms of assembly, part of the 30S ribosomal subunit. Forms a tight complex with proteins S10 and S14.

In terms of biological role, binds the lower part of the 30S subunit head. Binds mRNA in the 70S ribosome, positioning it for translation. The sequence is that of Small ribosomal subunit protein uS3 from Elusimicrobium minutum (strain Pei191).